A 160-amino-acid chain; its full sequence is Large ribosomal subunit protein uL11 (160 aa).

Belongs to the universal ribosomal protein uL11 family. As to quaternary structure, part of the ribosomal stalk of the 50S ribosomal subunit. Interacts with L10 and the large rRNA to form the base of the stalk. L10 forms an elongated spine to which L12 dimers bind in a sequential fashion forming a multimeric L10(L12)X complex.

Functionally, forms part of the ribosomal stalk which helps the ribosome interact with GTP-bound translation factors. This chain is Large ribosomal subunit protein uL11, found in Nanoarchaeum equitans (strain Kin4-M).